Consider the following 283-residue polypeptide: Pantothenate synthetase (283 aa).

30–37 (MGNLHDGH) contacts ATP. The active-site Proton donor is the histidine 37. Residue glutamine 61 coordinates (R)-pantoate. Glutamine 61 provides a ligand contact to beta-alanine. Position 149–152 (149–152 (GEKD)) interacts with ATP. Glutamine 155 is a (R)-pantoate binding site. 186 to 189 (LSSR) contacts ATP.

It belongs to the pantothenate synthetase family. In terms of assembly, homodimer.

It localises to the cytoplasm. The enzyme catalyses (R)-pantoate + beta-alanine + ATP = (R)-pantothenate + AMP + diphosphate + H(+). Its pathway is cofactor biosynthesis; (R)-pantothenate biosynthesis; (R)-pantothenate from (R)-pantoate and beta-alanine: step 1/1. Catalyzes the condensation of pantoate with beta-alanine in an ATP-dependent reaction via a pantoyl-adenylate intermediate. This is Pantothenate synthetase from Escherichia fergusonii (strain ATCC 35469 / DSM 13698 / CCUG 18766 / IAM 14443 / JCM 21226 / LMG 7866 / NBRC 102419 / NCTC 12128 / CDC 0568-73).